The sequence spans 108 residues: MFKGGMGNMMKQAQQMQERMQQAQEEVANMEVTGEAGAGLVKITMLGNHNVKRVSIDPSLMEDDQEMLEDLIAAATNDAVRRVEETSKERMSEITGGMGLPPGFKMPF.

Disordered stretches follow at residues 1-26 (MFKG…AQEE) and 88-108 (KERM…KMPF). Residues 9–26 (MMKQAQQMQERMQQAQEE) show a composition bias toward low complexity.

This sequence belongs to the YbaB/EbfC family. As to quaternary structure, homodimer.

It localises to the cytoplasm. Its subcellular location is the nucleoid. In terms of biological role, binds to DNA and alters its conformation. May be involved in regulation of gene expression, nucleoid organization and DNA protection. The polypeptide is Nucleoid-associated protein IL1848 (Idiomarina loihiensis (strain ATCC BAA-735 / DSM 15497 / L2-TR)).